We begin with the raw amino-acid sequence, 311 residues long: Methionyl-tRNA formyltransferase (311 aa).

110–113 (SLLP) contributes to the (6S)-5,6,7,8-tetrahydrofolate binding site.

It belongs to the Fmt family.

It catalyses the reaction L-methionyl-tRNA(fMet) + (6R)-10-formyltetrahydrofolate = N-formyl-L-methionyl-tRNA(fMet) + (6S)-5,6,7,8-tetrahydrofolate + H(+). Functionally, attaches a formyl group to the free amino group of methionyl-tRNA(fMet). The formyl group appears to play a dual role in the initiator identity of N-formylmethionyl-tRNA by promoting its recognition by IF2 and preventing the misappropriation of this tRNA by the elongation apparatus. This chain is Methionyl-tRNA formyltransferase, found in Streptococcus pneumoniae serotype 19F (strain G54).